A 245-amino-acid chain; its full sequence is Probable phosphatase YcdX (245 aa).

His7, His9, His15, His40, Glu73, His101, His131, Asp192, and His194 together coordinate Zn(2+).

It belongs to the PHP family. As to quaternary structure, homotrimer. Requires Zn(2+) as cofactor.

In Escherichia coli O17:K52:H18 (strain UMN026 / ExPEC), this protein is Probable phosphatase YcdX.